A 557-amino-acid chain; its full sequence is Resveratrol cleavage oxygenase 1 (557 aa).

Residues 1–46 are disordered; sequence MAILNDPPSSTTILSLHTPDVPPPSKPTPATTSHPQDSRNPRNLTS. 2 residues coordinate piceatannol: tyrosine 144 and lysine 177. Tyrosine 144 and lysine 177 together coordinate trans-resveratrol. Fe cation is bound by residues histidine 211, histidine 262, and histidine 334. Glutamate 404 provides a ligand contact to piceatannol. Glutamate 404 contacts trans-resveratrol. Residue histidine 523 participates in Fe cation binding.

It belongs to the carotenoid oxygenase family. Fe(2+) serves as cofactor.

It catalyses the reaction trans-resveratrol + O2 = 3,5-dihydroxybenzaldehyde + 4-hydroxybenzaldehyde. It carries out the reaction piceatannol + O2 = 3,5-dihydroxybenzaldehyde + 3,4-dihydroxybenzaldehyde. Functionally, dioxygenase that cleaves the interphenyl C-alpha-C-beta double bond of resveratrol to yield 3,5-dihydroxybenzaldehyde and 4-hydroxybenzaldehyde. Also cleaves piceatannol, a compound that differs from resveratrol only in the occurrence of an additional hydroxyl group, which leads to the production of 3,4-dihydroxybenzaldehyde and 3,5-hydroxybenzaldehyde. This is Resveratrol cleavage oxygenase 1 from Botryotinia fuckeliana (strain B05.10) (Noble rot fungus).